We begin with the raw amino-acid sequence, 422 residues long: MLDLSELKKKTIEDLLKIAEDLGVVSNGRMLKQEIIFHLMKKVVSDGGAAIGGGVVEILSDGFGFLRSPEANYAASGDDVYISAGQIKKFNLRTGDIVSGEIRAPSEKERYFTLVKAHSINFTDMAKLQRYVHFDDLIPLYPEERILLECNDPISVSKKDISMRVIDIVAPLGKGQRALIVAPPRAGKTIILQQIAHSISVNHPDIELIVLLIGERPEEVTDMCRSVKGEVVSSTFDEPGYRHVQLAEIVIEKAKRMVEHKKNVVILLDSITRLARAYNSVIPSSGKVLTGGVDSNALQRPKRFFGAARNIENGGSLTIIATALIETGSKMDEVIFEEFKGTGNCEIILDRKISDKRVYPAIDISKSGTRKEDMLIDSVCLKKVWLLRRLLSSMGSVEAMEFLRDKLLITKDNNEFFDMMNS.

A Rho RNA-BD domain is found at 49 to 124; the sequence is AAIGGGVVEI…VKAHSINFTD (76 aa). Residues 173–178, 185–190, and Arg216 contribute to the ATP site; these read GKGQRA and RAGKTI.

This sequence belongs to the Rho family. Homohexamer. The homohexamer assembles into an open ring structure.

Functionally, facilitates transcription termination by a mechanism that involves Rho binding to the nascent RNA, activation of Rho's RNA-dependent ATPase activity, and release of the mRNA from the DNA template. This chain is Transcription termination factor Rho 1, found in Ehrlichia chaffeensis (strain ATCC CRL-10679 / Arkansas).